Consider the following 128-residue polypeptide: MPQLLSRRVGRGSTRTAARMRRHFRVRKKISGTPERPRLVVHRSARHVFVQIVDDTRGHTLASASSFEPEMRSFAGDKTAKARRVGQLIAERAKAAGITTVVFDRAGYRYHGRVAAIADGAREGGLVL.

Belongs to the universal ribosomal protein uL18 family. In terms of assembly, part of the 50S ribosomal subunit; part of the 5S rRNA/L5/L18/L25 subcomplex. Contacts the 5S and 23S rRNAs.

This is one of the proteins that bind and probably mediate the attachment of the 5S RNA into the large ribosomal subunit, where it forms part of the central protuberance. This is Large ribosomal subunit protein uL18 from Acidothermus cellulolyticus (strain ATCC 43068 / DSM 8971 / 11B).